We begin with the raw amino-acid sequence, 199 residues long: MSTAPKDIETLIDLMARLPGLGPRSARRAVLFLLGKNRRLLAPLGEAMTAVAQTARDCLNCGNIGTSDICDICTSEKRATGEICVVEDVADLWAMERAGVFKGRYHVLGGTLSALDAVGPEELRIPKLRDRAVSEGATEIILALGATVDGQTTAHYIAEALEGTGVAVTSLAQGVPIGGELDYLDDGTITAALRARKSF.

The C4-type zinc-finger motif lies at 58–73; that stretch reads CLNCGNIGTSDICDIC. The Toprim domain maps to 81–176; sequence GEICVVEDVA…AVTSLAQGVP (96 aa).

It belongs to the RecR family.

Its function is as follows. May play a role in DNA repair. It seems to be involved in an RecBC-independent recombinational process of DNA repair. It may act with RecF and RecO. This chain is Recombination protein RecR, found in Dinoroseobacter shibae (strain DSM 16493 / NCIMB 14021 / DFL 12).